The chain runs to 252 residues: Major prion protein (252 aa).

Residues 1 to 22 form the signal peptide; it reads MANLGCWMLFLFVATWSDLGLC. The tract at residues 23–38 is interaction with ADGRG6; sequence KKRPKPGGWNTGGSRY. Residues 23–229 are interaction with GRB2, ERI3 and SYN1; the sequence is KKRPKPGGWN…ESQAYYQRGS (207 aa). Positions 26–106 are disordered; the sequence is PKPGGWNTGG…QWNKPSKPKT (81 aa). Tandem repeats lie at residues 51–58, 59–66, 67–74, 75–82, and 83–90. Positions 51–90 are 5 X 8 AA tandem repeats of P-H-G-G-G-W-G-Q; the sequence is PQGGGWGQPHGGGWGQPHGGGWGQPHGGGWGQPHGGGWGQ. Gly residues predominate over residues 52 to 94; the sequence is QGGGWGQPHGGGWGQPHGGGWGQPHGGGWGQPHGGGWGQGGGT. 12 residues coordinate Cu(2+): His-60, Gly-61, Gly-62, His-68, Gly-69, Gly-70, His-76, Gly-77, Gly-78, His-84, Gly-85, and Gly-86. A disulfide bond links Cys-178 and Cys-213. N-linked (GlcNAc...) asparagine glycosylation is found at Asn-180 and Asn-196. Residue Ser-229 is the site of GPI-anchor amidated serine attachment. A propeptide spans 230–252 (removed in mature form); sequence SMVLFSSPPVILLISFLIFLIVG.

Belongs to the prion family. In terms of assembly, monomer and homodimer. Has a tendency to aggregate into amyloid fibrils containing a cross-beta spine, formed by a steric zipper of superposed beta-strands. Soluble oligomers may represent an intermediate stage on the path to fibril formation. Copper binding may promote oligomerization. Interacts with GRB2, APP, ERI3/PRNPIP and SYN1. Mislocalized cytosolically exposed PrP interacts with MGRN1; this interaction alters MGRN1 subcellular location and causes lysosomal enlargement. Interacts with APP. Interacts with KIAA1191. Interacts with ADGRG6.

It localises to the cell membrane. The protein localises to the golgi apparatus. Functionally, its primary physiological function is unclear. May play a role in neuronal development and synaptic plasticity. May be required for neuronal myelin sheath maintenance. May promote myelin homeostasis through acting as an agonist for ADGRG6 receptor. May play a role in iron uptake and iron homeostasis. Soluble oligomers are toxic to cultured neuroblastoma cells and induce apoptosis (in vitro). Association with GPC1 (via its heparan sulfate chains) targets PRNP to lipid rafts. Also provides Cu(2+) or Zn(2+) for the ascorbate-mediated GPC1 deaminase degradation of its heparan sulfate side chains. This chain is Major prion protein (PRNP), found in Callithrix jacchus (White-tufted-ear marmoset).